The sequence spans 336 residues: uncharacterized protein (336 aa).

This sequence belongs to the GppA/Ppx family.

This is an uncharacterized protein from Streptomyces coelicolor (strain ATCC BAA-471 / A3(2) / M145).